A 146-amino-acid polypeptide reads, in one-letter code: Large ribosomal subunit protein uL15 (146 aa).

Positions 1–58 are disordered; sequence MNLSNLRAPKKANRNRKRVGRGMGSGHGKTSTRGHKGQRSRSGSRSMRGFEGGQMPLH. 2 stretches are compositionally biased toward basic residues: residues 8–20 and 30–39; these read APKK…KRVG and TSTRGHKGQR. The segment covering 40–49 has biased composition (low complexity); the sequence is SRSGSRSMRG.

It belongs to the universal ribosomal protein uL15 family. Part of the 50S ribosomal subunit.

Its function is as follows. Binds to the 23S rRNA. The sequence is that of Large ribosomal subunit protein uL15 from Acidobacterium capsulatum (strain ATCC 51196 / DSM 11244 / BCRC 80197 / JCM 7670 / NBRC 15755 / NCIMB 13165 / 161).